The following is a 331-amino-acid chain: CRISPR-associated endonuclease Cas1 1 (331 aa).

Mn(2+)-binding residues include E161, H226, and E241.

This sequence belongs to the CRISPR-associated endonuclease Cas1 family. Homodimer, forms a heterotetramer with a Cas2 homodimer. It depends on Mg(2+) as a cofactor. The cofactor is Mn(2+).

In terms of biological role, CRISPR (clustered regularly interspaced short palindromic repeat), is an adaptive immune system that provides protection against mobile genetic elements (viruses, transposable elements and conjugative plasmids). CRISPR clusters contain spacers, sequences complementary to antecedent mobile elements, and target invading nucleic acids. CRISPR clusters are transcribed and processed into CRISPR RNA (crRNA). Acts as a dsDNA endonuclease. Involved in the integration of spacer DNA into the CRISPR cassette. The protein is CRISPR-associated endonuclease Cas1 1 of Methanospirillum hungatei JF-1 (strain ATCC 27890 / DSM 864 / NBRC 100397 / JF-1).